A 120-amino-acid chain; its full sequence is MRCSLQFLGVLMFWISGVSGDIVITQDELSNPVTSGESVSISCRSSKSLLYKDGKTYLNWFLQRPGQSPQLLIYLMSTRASGVSDRFSGSGSGTDFTLEISRVKAEDVGVYYCQQLVEYP.

Residues 1–20 (MRCSLQFLGVLMFWISGVSG) form the signal peptide. The interval 21–43 (DIVITQDELSNPVTSGESVSISC) is framework-1. A disulfide bridge links C43 with C113. The tract at residues 44–59 (RSSKSLLYKDGKTYLN) is complementarity-determining-1. Positions 60 to 74 (WFLQRPGQSPQLLIY) are framework-2. The tract at residues 75-81 (LMSTRAS) is complementarity-determining-2. The tract at residues 82-113 (GVSDRFSGSGSGTDFTLEISRVKAEDVGVYYC) is framework-3. Positions 114-120 (QQLVEYP) are complementarity-determining-3.

This Mus musculus (Mouse) protein is Immunoglobulin kappa variable 2-112.